Consider the following 473-residue polypeptide: Ribulose bisphosphate carboxylase large chain 1 (473 aa).

Substrate is bound by residues Asn-116 and Thr-166. Lys-168 acts as the Proton acceptor in catalysis. Position 170 (Lys-170) interacts with substrate. Mg(2+)-binding residues include Lys-194, Asp-196, and Glu-197. An N6-carboxylysine modification is found at Lys-194. Residue His-287 is the Proton acceptor of the active site. Positions 288, 320, and 372 each coordinate substrate.

The protein belongs to the RuBisCO large chain family. Type I subfamily. As to quaternary structure, heterohexadecamer of 8 large chains and 8 small chains. The cofactor is Mg(2+).

The enzyme catalyses 2 (2R)-3-phosphoglycerate + 2 H(+) = D-ribulose 1,5-bisphosphate + CO2 + H2O. It catalyses the reaction D-ribulose 1,5-bisphosphate + O2 = 2-phosphoglycolate + (2R)-3-phosphoglycerate + 2 H(+). Functionally, ruBisCO catalyzes two reactions: the carboxylation of D-ribulose 1,5-bisphosphate, the primary event in carbon dioxide fixation, as well as the oxidative fragmentation of the pentose substrate. Both reactions occur simultaneously and in competition at the same active site. This chain is Ribulose bisphosphate carboxylase large chain 1, found in Acidithiobacillus ferrooxidans (Thiobacillus ferrooxidans).